The chain runs to 633 residues: Polypeptide N-acetylgalactosaminyltransferase 3 (633 aa).

The Cytoplasmic portion of the chain corresponds to 1–19 (MAHLKRLVKLHIKRHYHKK). A helical; Signal-anchor for type II membrane protein transmembrane segment spans residues 20 to 37 (FWKLGAVIFFFIIVLVLM). The Lumenal segment spans residues 38–633 (QREVSVQYSK…LQKWILSQND (596 aa)). A glycan (N-linked (GlcNAc...) asparagine) is linked at asparagine 132. Residues 184-293 (LPTTSVIIVF…YGWLEPLLAR (110 aa)) are catalytic subdomain A. Residues aspartate 277 and histidine 279 each coordinate Mn(2+). A glycan (N-linked (GlcNAc...) asparagine) is linked at asparagine 297. Positions 356–418 (PIKTPTFAGG…PCSVVGHVFR (63 aa)) are catalytic subdomain B. Mn(2+) is bound at residue histidine 415. Asparagine 484 carries N-linked (GlcNAc...) asparagine glycosylation. The Ricin B-type lectin domain maps to 504–630 (VISGYIKSVG…SDPLQKWILS (127 aa)). Cysteine 517 and cysteine 535 form a disulfide bridge. UDP-N-acetyl-alpha-D-galactosamine is bound by residues aspartate 519, glutamate 522, histidine 536, and asparagine 541. 2 disulfide bridges follow: cysteine 561–cysteine 574 and cysteine 605–cysteine 618.

The protein belongs to the glycosyltransferase 2 family. GalNAc-T subfamily. The cofactor is Mn(2+). In terms of tissue distribution, expressed in organs that contain secretory epithelial glands. Highly expressed in pancreas, skin, kidney and testis. Weakly expressed in prostate, ovary, intestine and colon. Also expressed in placenta and lung and fetal lung and fetal kidney.

It is found in the golgi apparatus. It localises to the golgi stack membrane. It carries out the reaction L-seryl-[protein] + UDP-N-acetyl-alpha-D-galactosamine = a 3-O-[N-acetyl-alpha-D-galactosaminyl]-L-seryl-[protein] + UDP + H(+). It catalyses the reaction L-threonyl-[protein] + UDP-N-acetyl-alpha-D-galactosamine = a 3-O-[N-acetyl-alpha-D-galactosaminyl]-L-threonyl-[protein] + UDP + H(+). It functions in the pathway protein modification; protein glycosylation. Its function is as follows. Catalyzes the initial reaction in O-linked oligosaccharide biosynthesis, the transfer of an N-acetyl-D-galactosamine residue to a serine or threonine residue on the protein receptor. Has activity toward HIV envelope glycoprotein gp120, EA2, MUC2, MUC1A and MUC5AC. Probably glycosylates fibronectin in vivo. Glycosylates FGF23. The protein is Polypeptide N-acetylgalactosaminyltransferase 3 (GALNT3) of Homo sapiens (Human).